A 413-amino-acid polypeptide reads, in one-letter code: 1-deoxy-D-xylulose 5-phosphate reductoisomerase (413 aa).

T21, G22, S23, I24, G47, and N127 together coordinate NADPH. Residue K128 coordinates 1-deoxy-D-xylulose 5-phosphate. Residue E129 participates in NADPH binding. Residue D151 participates in Mn(2+) binding. The 1-deoxy-D-xylulose 5-phosphate site is built by S152, E153, S177, and H200. E153 lines the Mn(2+) pocket. An NADPH-binding site is contributed by G206. Residues S213, N218, K219, and E222 each contribute to the 1-deoxy-D-xylulose 5-phosphate site. A Mn(2+)-binding site is contributed by E222.

It belongs to the DXR family. The cofactor is Mg(2+). Mn(2+) serves as cofactor.

It catalyses the reaction 2-C-methyl-D-erythritol 4-phosphate + NADP(+) = 1-deoxy-D-xylulose 5-phosphate + NADPH + H(+). Its pathway is isoprenoid biosynthesis; isopentenyl diphosphate biosynthesis via DXP pathway; isopentenyl diphosphate from 1-deoxy-D-xylulose 5-phosphate: step 1/6. Functionally, catalyzes the NADPH-dependent rearrangement and reduction of 1-deoxy-D-xylulose-5-phosphate (DXP) to 2-C-methyl-D-erythritol 4-phosphate (MEP). In Mycobacterium bovis (strain ATCC BAA-935 / AF2122/97), this protein is 1-deoxy-D-xylulose 5-phosphate reductoisomerase.